The sequence spans 310 residues: Olfactory receptor 5P52 (310 aa).

Residues 1–25 lie on the Extracellular side of the membrane; that stretch reads MEAENHTTVAELIILGLTEDPKLCI. The N-linked (GlcNAc...) asparagine glycan is linked to N5. A helical membrane pass occupies residues 26 to 46; it reads VFFVIFLGVYIITLVGNISII. Over 47-54 the chain is Cytoplasmic; the sequence is TLIRISSQ. Residues 55–75 form a helical membrane-spanning segment; the sequence is LHTPMYLFLSHLAFVDIVFST. Residues 76–99 are Extracellular-facing; that stretch reads SVSVIMLMELLGHGLVLSVATCAA. C97 and C189 are oxidised to a cystine. Residues 100 to 120 traverse the membrane as a helical segment; it reads QLCMTVSFGSAECFLLAAMAY. Residues 121 to 133 lie on the Cytoplasmic side of the membrane; sequence DRYVAICSPLLYS. Residues 134-154 form a helical membrane-spanning segment; that stretch reads TLMSSRVCFLLLGISYVGGFV. At 155–196 the chain is on the extracellular side; it reads NGWTFTGCVLSLSFCGPTQINHFFCDFSPLLKVSCSDVSIIG. The helical transmembrane segment at 197–217 threads the bilayer; the sequence is IIPSISSGSIIVVTVFVIAVS. The Cytoplasmic portion of the chain corresponds to 218–237; the sequence is YIYILITILKMRSTEGRHKA. The helical transmembrane segment at 238-258 threads the bilayer; the sequence is FSTCTSHLTAVTLFYGTITVI. Residues 259 to 271 lie on the Extracellular side of the membrane; sequence YVMPKSSYSTEQN. The chain crosses the membrane as a helical span at residues 272 to 292; it reads KVISLFYTVVIPMLNPLIYSL. Over 293–310 the chain is Cytoplasmic; sequence RNRDVKDALRKAIVRVYS.

This sequence belongs to the G-protein coupled receptor 1 family.

It is found in the cell membrane. Potential odorant receptor. The polypeptide is Olfactory receptor 5P52 (Mus musculus (Mouse)).